We begin with the raw amino-acid sequence, 397 residues long: uncharacterized protein (397 aa).

The next 11 helical transmembrane spans lie at 9–29 (NAVLGAAFLMATSAIGPGFLT), 38–58 (LLASFGFVILLSILLDIGAQL), 85–105 (FLAALIVMGGLAFNIGNVGGA), 112–132 (IFGIAPEMGAVISGIIAILIF), 148–168 (MGFIMVVLTFYVMFKTEPPVV), 182–202 (PIAIVTLVGGTVGGYITFAGA), 226–246 (AILIASTMRVVLFLAVLGVVS), 271–291 (VLFGVVIWAASVTSVIGAAYT), 310–330 (WIIAFIVISTVVLVTVGKPAA), 331–351 (VLVFVGTLNGLILPIALALIL), and 365–385 (HPVFLAFSGWFVVIIMAILSG).

This sequence belongs to the NRAMP family.

Its subcellular location is the cell membrane. This is an uncharacterized protein from Haemophilus influenzae (strain ATCC 51907 / DSM 11121 / KW20 / Rd).